A 656-amino-acid polypeptide reads, in one-letter code: Hemocyanin subunit A (656 aa).

A signal peptide spans 1-18 (MWSLALATLFVLGTVIRA). Histidine 197, histidine 201, and histidine 227 together coordinate Cu cation. Asparagine 313 carries an N-linked (GlcNAc...) asparagine glycan. Residues histidine 348, histidine 352, and histidine 388 each contribute to the Cu cation site. Residues cysteine 558 and cysteine 606 are joined by a disulfide bond.

Belongs to the tyrosinase family. Hemocyanin subfamily. As to quaternary structure, 36-chain polymer consisting of 6 hexamers, each of which includes 4 different chains, A, B, C and D. In terms of tissue distribution, hemolymph.

It localises to the secreted. Its subcellular location is the extracellular space. Functionally, hemocyanins are copper-containing oxygen carriers occurring freely dissolved in the hemolymph of many mollusks and arthropods. The chain is Hemocyanin subunit A (HCA) from Scutigera coleoptrata (House centipede).